The chain runs to 379 residues: Flagellin A (379 aa).

Coiled coils occupy residues 104–129 (NSASERQALNEESVALQDELNRIAET) and 314–341 (QNRLSHSISNLSNIQENVEASKSRIKDT).

The protein belongs to the bacterial flagellin family. In terms of assembly, heteromer of multiple flagellin subunits including FlaA, FlaB, FlaC, FlaD and FlaE.

It localises to the secreted. It is found in the bacterial flagellum. Functionally, flagellin is the subunit protein which polymerizes to form the filaments of bacterial flagella. FlaA is required to form a core or scaffold into which the other flagellins are inserted to provide structural integrity. Essential for flagellar synthesis and motility; important for full virulence. This is Flagellin A (flaA) from Vibrio cholerae serotype O1 (strain ATCC 39541 / Classical Ogawa 395 / O395).